Reading from the N-terminus, the 261-residue chain is CD40 ligand (261 aa).

The Cytoplasmic portion of the chain corresponds to 1–22 (MIETYNQPSPRSAATGLPVRMK). Residues 23–43 (IFMYLLTIFLITQMIGSALFA) form a helical; Signal-anchor for type II membrane protein membrane-spanning segment. The Extracellular segment spans residues 44-261 (VYLHRRLDKI…GFTSFGLLKL (218 aa)). In terms of domain architecture, THD spans 122 to 261 (IAAHVISEAS…GFTSFGLLKL (140 aa)). Cysteine 178 and cysteine 218 are oxidised to a cystine. Residue asparagine 240 is glycosylated (N-linked (GlcNAc...) asparagine).

The protein belongs to the tumor necrosis factor family. As to quaternary structure, homotrimer. Interacts with CD28. CD40 ligand, soluble form: Exists as either a monomer or a homotrimer. Forms a ternary complex between CD40 and integrins for CD40-CD40LG signaling. The soluble form derives from the membrane form by proteolytic processing.

Its subcellular location is the cell membrane. It localises to the cell surface. It is found in the secreted. Functionally, cytokine that acts as a ligand to CD40/TNFRSF5. Costimulates T-cell proliferation and cytokine production. Its cross-linking on T-cells generates a costimulatory signal which enhances the production of IL4 and IL10 in conjunction with the TCR/CD3 ligation and CD28 costimulation. Induces the activation of NF-kappa-B. Induces the activation of kinases MAPK8 and PAK2 in T-cells. Mediates B-cell proliferation in the absence of co-stimulus as well as IgE production in the presence of IL4. Involved in immunoglobulin class switching. In terms of biological role, acts as a ligand for integrins, specifically ITGA5:ITGB1 and ITGAV:ITGB3; both integrins and the CD40 receptor are required for activation of CD40-CD40LG signaling, which have cell-type dependent effects, such as B-cell activation, NF-kappa-B signaling and anti-apoptotic signaling. The chain is CD40 ligand (CD40LG) from Cercocebus atys (Sooty mangabey).